Here is a 486-residue protein sequence, read N- to C-terminus: Ribulose bisphosphate carboxylase large chain (486 aa).

2 residues coordinate substrate: N126 and T176. Catalysis depends on K178, which acts as the Proton acceptor. K180 lines the substrate pocket. K204, D206, and E207 together coordinate Mg(2+). K204 bears the N6-carboxylysine mark. Residue H296 is the Proton acceptor of the active site. Substrate contacts are provided by R297, H329, and S381.

This sequence belongs to the RuBisCO large chain family. Type I subfamily. Heterohexadecamer of 8 large chains and 8 small chains. Mg(2+) serves as cofactor.

The enzyme catalyses 2 (2R)-3-phosphoglycerate + 2 H(+) = D-ribulose 1,5-bisphosphate + CO2 + H2O. It carries out the reaction D-ribulose 1,5-bisphosphate + O2 = 2-phosphoglycolate + (2R)-3-phosphoglycerate + 2 H(+). Its function is as follows. RuBisCO catalyzes two reactions: the carboxylation of D-ribulose 1,5-bisphosphate, the primary event in carbon dioxide fixation, as well as the oxidative fragmentation of the pentose substrate. Both reactions occur simultaneously and in competition at the same active site. In Sinorhizobium medicae (strain WSM419) (Ensifer medicae), this protein is Ribulose bisphosphate carboxylase large chain.